A 140-amino-acid polypeptide reads, in one-letter code: uncharacterized protein (140 aa).

This is an uncharacterized protein from Acanthamoeba polyphaga mimivirus (APMV).